Reading from the N-terminus, the 465-residue chain is Sodium-dependent phosphate transport protein 1 (465 aa).

N-linked (GlcNAc...) asparagine glycans are attached at residues asparagine 39, asparagine 47, and asparagine 56. Helical transmembrane passes span 79 to 99 (GLVLSSVFLGMVVIQVPVGYL), 117 to 137 (SVLSLLIPPAAQVGAALVIVC), 176 to 196 (FVMGPFIALLVSGFICDLLGW), 199 to 219 (VFYIFGIVGCVLSLFWFILLF), 260 to 280 (LPLWAIILNSFAFIWSNNLLV), 299 to 319 (GLLSSLPYLLAYICGIVAGQM), 337 to 357 (LFTTLGIFCPVIFVVCLLYLS), 363 to 383 (TVIFLTLANSTLSFSFCGQLI), 399 to 419 (VTALIGIFGGLISSTLAGLIL), and 431 to 451 (FFLMAGINVTCLAFYLLFAKG).

This sequence belongs to the major facilitator superfamily. Sodium/anion cotransporter family. In terms of assembly, interacts with PDZK1.

The protein localises to the apical cell membrane. It catalyses the reaction 3 Na(+)(out) + phosphate(out) = 3 Na(+)(in) + phosphate(in). The catalysed reaction is urate(out) = urate(in). In terms of biological role, important for the resorption of phosphate by the kidney. May be involved in actively transporting phosphate into cells via Na(+) cotransport in the renal brush border membrane. Plays a role in urate transport in the kidney. The protein is Sodium-dependent phosphate transport protein 1 (Slc17a1) of Rattus norvegicus (Rat).